Reading from the N-terminus, the 545-residue chain is Phenylalanine--tRNA ligase beta subunit (545 aa).

One can recognise a B5 domain in the interval 268–343 (FLHKIQNVRE…MSIGYNNLEP (76 aa)). Residues Asp-321, Asp-327, Glu-330, and Asp-331 each contribute to the Mg(2+) site.

The protein belongs to the phenylalanyl-tRNA synthetase beta subunit family. Type 2 subfamily. Tetramer of two alpha and two beta subunits. Requires Mg(2+) as cofactor.

It is found in the cytoplasm. It carries out the reaction tRNA(Phe) + L-phenylalanine + ATP = L-phenylalanyl-tRNA(Phe) + AMP + diphosphate + H(+). This Saccharolobus islandicus (strain L.S.2.15 / Lassen #1) (Sulfolobus islandicus) protein is Phenylalanine--tRNA ligase beta subunit.